The primary structure comprises 285 residues: Bifunctional protein FolD (285 aa).

NADP(+) contacts are provided by residues 166-168 (GAS) and Ile232.

It belongs to the tetrahydrofolate dehydrogenase/cyclohydrolase family. In terms of assembly, homodimer.

The enzyme catalyses (6R)-5,10-methylene-5,6,7,8-tetrahydrofolate + NADP(+) = (6R)-5,10-methenyltetrahydrofolate + NADPH. The catalysed reaction is (6R)-5,10-methenyltetrahydrofolate + H2O = (6R)-10-formyltetrahydrofolate + H(+). Its pathway is one-carbon metabolism; tetrahydrofolate interconversion. With respect to regulation, the NAD(+)-dependent dehydrogenase is activated by inorganic phosphate. Catalyzes the oxidation of 5,10-methylenetetrahydrofolate to 5,10-methenyltetrahydrofolate and then the hydrolysis of 5,10-methenyltetrahydrofolate to 10-formyltetrahydrofolate. The protein is Bifunctional protein FolD of Photobacterium phosphoreum.